A 141-amino-acid polypeptide reads, in one-letter code: Lutropin subunit beta (141 aa).

Residues 1-20 form the signal peptide; the sequence is MEMFQGLLLWLLLNTGGAWA. 6 disulfide bridges follow: cysteine 29/cysteine 77, cysteine 43/cysteine 92, cysteine 46/cysteine 130, cysteine 54/cysteine 108, cysteine 58/cysteine 110, and cysteine 113/cysteine 120. An N-linked (GlcNAc...) asparagine glycan is attached at asparagine 33.

Belongs to the glycoprotein hormones subunit beta family. In terms of assembly, heterodimer of a common alpha chain and a unique beta chain which confers biological specificity to thyrotropin, lutropin, follitropin and gonadotropin.

The protein localises to the secreted. Promotes spermatogenesis and ovulation by stimulating the testes and ovaries to synthesize steroids. The protein is Lutropin subunit beta (LHB) of Ailuropoda melanoleuca (Giant panda).